A 422-amino-acid chain; its full sequence is Histidine--tRNA ligase (422 aa).

The protein belongs to the class-II aminoacyl-tRNA synthetase family. In terms of assembly, homodimer.

It is found in the cytoplasm. The enzyme catalyses tRNA(His) + L-histidine + ATP = L-histidyl-tRNA(His) + AMP + diphosphate + H(+). This Vesicomyosocius okutanii subsp. Calyptogena okutanii (strain HA) protein is Histidine--tRNA ligase.